The chain runs to 389 residues: Chalcone synthase 4-2 (389 aa).

The active site involves cysteine 164.

Belongs to the thiolase-like superfamily. Chalcone/stilbene synthases family.

It carries out the reaction (E)-4-coumaroyl-CoA + 3 malonyl-CoA + 3 H(+) = 2',4,4',6'-tetrahydroxychalcone + 3 CO2 + 4 CoA. It functions in the pathway secondary metabolite biosynthesis; flavonoid biosynthesis. Functionally, the primary product of this enzyme is 4,2',4',6'-tetrahydroxychalcone (also termed naringenin-chalcone or chalcone) which can under specific conditions spontaneously isomerize into naringenin. The chain is Chalcone synthase 4-2 (CHS4-2) from Medicago sativa (Alfalfa).